The primary structure comprises 417 residues: NADH-quinone oxidoreductase subunit D (417 aa).

This sequence belongs to the complex I 49 kDa subunit family. As to quaternary structure, NDH-1 is composed of 14 different subunits. Subunits NuoB, C, D, E, F, and G constitute the peripheral sector of the complex.

It localises to the cell inner membrane. The enzyme catalyses a quinone + NADH + 5 H(+)(in) = a quinol + NAD(+) + 4 H(+)(out). Functionally, NDH-1 shuttles electrons from NADH, via FMN and iron-sulfur (Fe-S) centers, to quinones in the respiratory chain. The immediate electron acceptor for the enzyme in this species is believed to be ubiquinone. Couples the redox reaction to proton translocation (for every two electrons transferred, four hydrogen ions are translocated across the cytoplasmic membrane), and thus conserves the redox energy in a proton gradient. The chain is NADH-quinone oxidoreductase subunit D from Burkholderia thailandensis (strain ATCC 700388 / DSM 13276 / CCUG 48851 / CIP 106301 / E264).